A 772-amino-acid chain; its full sequence is Acylamino-acid-releasing enzyme 2 (772 aa).

Residues Ser-617, Asp-708, and His-740 each act as charge relay system in the active site.

The protein belongs to the peptidase S9C family. As to quaternary structure, homotetramer.

It is found in the cytoplasm. The enzyme catalyses Cleavage of an N-acetyl or N-formyl amino acid from the N-terminus of a polypeptide.. Catalyzes the hydrolysis of the N-terminal peptide bond of an N-acetylated peptide to generate an N-acetylated amino acid and a peptide with a free N-terminus. The chain is Acylamino-acid-releasing enzyme 2 from Oryza sativa subsp. japonica (Rice).